We begin with the raw amino-acid sequence, 404 residues long: Transcription factor sem-2 (404 aa).

The HMG box DNA-binding region spans 93–161 (IKRPMNAFMV…CHMQEYPDYK (69 aa)). Disordered regions lie at residues 158–218 (PDYK…QFQN) and 321–359 (HTSP…NSAG). The segment covering 177-199 (QQPAQPQAPQQQQAPPRGASPQA) has biased composition (low complexity). Polar residues-rich tracts occupy residues 207 to 218 (TDQQSETQQFQN) and 347 to 359 (ASEQ…NSAG).

It localises to the nucleus. Functionally, probable transcription factor required for embryogenesis, vulval development and cell fate specification of the postembryonic mesoderm (also known as the M lineage). Specifically, required for the specification of sex myoblast cells and their development into the muscles that are necessary for egg-laying. In addition, may be involved in RME GABAergic motor neuron progenitor cell fate specification. This Caenorhabditis elegans protein is Transcription factor sem-2.